Consider the following 142-residue polypeptide: Low molecular weight protein-tyrosine-phosphatase Ptp (142 aa).

Catalysis depends on Cys-10, which acts as the Nucleophile. Arg-16 is a catalytic residue. The active-site Proton donor is the Asp-115.

The protein belongs to the low molecular weight phosphotyrosine protein phosphatase family.

It carries out the reaction O-phospho-L-tyrosyl-[protein] + H2O = L-tyrosyl-[protein] + phosphate. It functions in the pathway glycan metabolism; exopolysaccharide biosynthesis. Inhibited by ammonium molybdate, sodium orthovanadate, N-ethylmaleimide and iodoacetic acid. Dephosphorylates ptk. May be involved in the production and the transport of exopolysaccharides. The sequence is that of Low molecular weight protein-tyrosine-phosphatase Ptp (ptp) from Acinetobacter johnsonii.